A 157-amino-acid polypeptide reads, in one-letter code: Phosphopantetheine adenylyltransferase (157 aa).

It belongs to the eukaryotic CoaD family. In terms of assembly, monomer.

The protein resides in the cytoplasm. It catalyses the reaction (R)-4'-phosphopantetheine + ATP + H(+) = 3'-dephospho-CoA + diphosphate. Its pathway is cofactor biosynthesis; coenzyme A biosynthesis. Its function is as follows. Reversibly transfers an adenylyl group from ATP to 4'-phosphopantetheine, yielding dephospho-CoA (dPCoA) and pyrophosphate. This Pyrococcus abyssi (strain GE5 / Orsay) protein is Phosphopantetheine adenylyltransferase.